The sequence spans 84 residues: UPF0320 protein YNR077C (84 aa).

The protein belongs to the UPF0320 family.

In Saccharomyces cerevisiae (strain ATCC 204508 / S288c) (Baker's yeast), this protein is UPF0320 protein YNR077C.